A 214-amino-acid chain; its full sequence is Dephospho-CoA kinase (214 aa).

One can recognise a DPCK domain in the interval 20 to 214; that stretch reads RIGITGGIAS…KLQLKKLYKF (195 aa). Residue 28–33 participates in ATP binding; sequence ASGKTI.

Belongs to the CoaE family.

Its subcellular location is the cytoplasm. The enzyme catalyses 3'-dephospho-CoA + ATP = ADP + CoA + H(+). It participates in cofactor biosynthesis; coenzyme A biosynthesis; CoA from (R)-pantothenate: step 5/5. Its function is as follows. Catalyzes the phosphorylation of the 3'-hydroxyl group of dephosphocoenzyme A to form coenzyme A. This Prochlorococcus marinus (strain NATL2A) protein is Dephospho-CoA kinase.